A 150-amino-acid polypeptide reads, in one-letter code: MKTIDARKLDIKREWYVIDATGKNLGRLATLIANILRGKHKPYFQPDVDVGDFVIVLNADKITVTGKKLTDKEYKWHTNRPGGLNVRTLQWMLEHKPEEVIRLAVERMLPKNKLQKRFMKRLKVYTGSEHKHQAQNPKNLEELKALWKNF.

It belongs to the universal ribosomal protein uL13 family. In terms of assembly, part of the 50S ribosomal subunit.

This protein is one of the early assembly proteins of the 50S ribosomal subunit, although it is not seen to bind rRNA by itself. It is important during the early stages of 50S assembly. The polypeptide is Large ribosomal subunit protein uL13 (Persephonella marina (strain DSM 14350 / EX-H1)).